The sequence spans 370 residues: DNA replication and repair protein RecF (370 aa).

30–37 (GENAQGKT) is a binding site for ATP.

This sequence belongs to the RecF family.

The protein localises to the cytoplasm. Functionally, the RecF protein is involved in DNA metabolism; it is required for DNA replication and normal SOS inducibility. RecF binds preferentially to single-stranded, linear DNA. It also seems to bind ATP. The sequence is that of DNA replication and repair protein RecF from Listeria welshimeri serovar 6b (strain ATCC 35897 / DSM 20650 / CCUG 15529 / CIP 8149 / NCTC 11857 / SLCC 5334 / V8).